A 342-amino-acid polypeptide reads, in one-letter code: MGVTVAVAGASGYGGGELLRLLLAHPEIKIGALAANASAGLPVTEVHPHLPDLEGRVFTDAAALAGTDADIVFLALPHGQSAAVAATLPDTVRVADLGADHRLVDPEAWRRAYGGEHAGTWTYGLPELPWARAEIAASRRVAIPGCYPTATSLGLVPLLVGGLVEPADLVVVAASGTSGAGRSATVNLLGSEVMGDLTAYKVGTHQHRPEITQTLSRAAGMTVTVSFTPVLAPLPRGILATSTGRATPGTDADAVYETLRAAYAGEPFVRVLPPGRWPHTAATLGGNAVHVQGTFDPETGRAIVVTAIDNLGKGAAGQALQCANLMLGLPETAGLTAQGIAP.

C146 is a catalytic residue.

Belongs to the NAGSA dehydrogenase family. Type 1 subfamily.

Its subcellular location is the cytoplasm. The catalysed reaction is N-acetyl-L-glutamate 5-semialdehyde + phosphate + NADP(+) = N-acetyl-L-glutamyl 5-phosphate + NADPH + H(+). It functions in the pathway amino-acid biosynthesis; L-arginine biosynthesis; N(2)-acetyl-L-ornithine from L-glutamate: step 3/4. In terms of biological role, catalyzes the NADPH-dependent reduction of N-acetyl-5-glutamyl phosphate to yield N-acetyl-L-glutamate 5-semialdehyde. This is N-acetyl-gamma-glutamyl-phosphate reductase from Frankia casuarinae (strain DSM 45818 / CECT 9043 / HFP020203 / CcI3).